Consider the following 231-residue polypeptide: Ion-translocating oxidoreductase complex subunit E (231 aa).

Helical transmembrane passes span 18-38 (ALVQLLGLCPLLAVTSTATNA), 39-59 (LGLGLATTLVLTLTNLTISTL), 63-83 (TPAEIRIPIYVMIIASVVSAV), 86-106 (LINAYAFGLYQSLGIFIPLIV), 125-145 (ALSALDGFSIGMGATCAMFVL), and 182-202 (PFLLAMLPPGAFIGLGLMLAG).

Belongs to the NqrDE/RnfAE family. In terms of assembly, the complex is composed of six subunits: RsxA, RsxB, RsxC, RsxD, RsxE and RsxG.

It is found in the cell inner membrane. Part of a membrane-bound complex that couples electron transfer with translocation of ions across the membrane. Required to maintain the reduced state of SoxR. The sequence is that of Ion-translocating oxidoreductase complex subunit E from Escherichia coli (strain SE11).